The following is a 183-amino-acid chain: Ferritin heavy chain (183 aa).

N-acetylmethionine is present on Met1. Thr2 is subject to N-acetylthreonine; in Ferritin heavy chain, N-terminally processed. Positions 11–160 (QNYHQDSEAA…DHVTNLRKMG (150 aa)) constitute a Ferritin-like diiron domain. The Fe cation site is built by Glu28, Glu63, His66, Glu108, and Gln142. 2 positions are modified to phosphoserine: Ser179 and Ser183.

Belongs to the ferritin family. As to quaternary structure, oligomer of 24 subunits. There are two types of subunits: L (light) chain and H (heavy) chain. The major chain can be light or heavy, depending on the species and tissue type. The functional molecule forms a roughly spherical shell with a diameter of 12 nm and contains a central cavity into which the insoluble mineral iron core is deposited. Interacts with NCOA4; NCOA4 promotes targeting of the iron-binding ferritin complex to autolysosomes following starvation or iron depletion.

The protein localises to the cytoplasm. It localises to the lysosome. It is found in the cytoplasmic vesicle. Its subcellular location is the autophagosome. The enzyme catalyses 4 Fe(2+) + O2 + 4 H(+) = 4 Fe(3+) + 2 H2O. Its function is as follows. Stores iron in a soluble, non-toxic, readily available form. Important for iron homeostasis. Has ferroxidase activity. Iron is taken up in the ferrous form and deposited as ferric hydroxides after oxidation. Also plays a role in delivery of iron to cells. Mediates iron uptake in capsule cells of the developing kidney. Delivery to lysosomes is mediated by the cargo receptor NCOA4 for autophagic degradation and release of iron. The polypeptide is Ferritin heavy chain (FTH1) (Canis lupus familiaris (Dog)).